A 118-amino-acid chain; its full sequence is UPF0102 protein lpp3065 (118 aa).

Belongs to the UPF0102 family.

The polypeptide is UPF0102 protein lpp3065 (Legionella pneumophila (strain Paris)).